The sequence spans 96 residues: Teretoxin Tan6.14 (96 aa).

Residues 1-21 form the signal peptide; it reads MRPLLVFVLMVSVSLAFSLEG. Residues 22-60 constitute a propeptide that is removed on maturation; the sequence is MPNNGGDSVASITANQARRFKRNPLFSFAQHSLVDLKAR.

In terms of processing, contains 3 disulfide bonds. As to expression, expressed by the venom duct.

It localises to the secreted. The protein is Teretoxin Tan6.14 of Terebra anilis (Auger snail).